Here is a 340-residue protein sequence, read N- to C-terminus: S-adenosylmethionine:tRNA ribosyltransferase-isomerase (340 aa).

This sequence belongs to the QueA family. As to quaternary structure, monomer.

It localises to the cytoplasm. The catalysed reaction is 7-aminomethyl-7-carbaguanosine(34) in tRNA + S-adenosyl-L-methionine = epoxyqueuosine(34) in tRNA + adenine + L-methionine + 2 H(+). The protein operates within tRNA modification; tRNA-queuosine biosynthesis. Transfers and isomerizes the ribose moiety from AdoMet to the 7-aminomethyl group of 7-deazaguanine (preQ1-tRNA) to give epoxyqueuosine (oQ-tRNA). In Aliarcobacter butzleri (strain RM4018) (Arcobacter butzleri), this protein is S-adenosylmethionine:tRNA ribosyltransferase-isomerase.